Reading from the N-terminus, the 277-residue chain is Phosphoenolpyruvate synthase regulatory protein (277 aa).

Residue 157–164 participates in ADP binding; it reads GVSRCGKT.

Belongs to the pyruvate, phosphate/water dikinase regulatory protein family. PSRP subfamily.

It carries out the reaction [pyruvate, water dikinase] + ADP = [pyruvate, water dikinase]-phosphate + AMP + H(+). It catalyses the reaction [pyruvate, water dikinase]-phosphate + phosphate + H(+) = [pyruvate, water dikinase] + diphosphate. In terms of biological role, bifunctional serine/threonine kinase and phosphorylase involved in the regulation of the phosphoenolpyruvate synthase (PEPS) by catalyzing its phosphorylation/dephosphorylation. The polypeptide is Phosphoenolpyruvate synthase regulatory protein (Salmonella agona (strain SL483)).